We begin with the raw amino-acid sequence, 318 residues long: Probable RNA methyltransferase At5g51130 (318 aa).

2 disordered regions span residues 1–61 (MGRD…NQEV) and 146–184 (NSTK…DSAE). Residues 16–34 (RSNENEKSVEKVVANEEKV) show a composition bias toward basic and acidic residues. The span at 37 to 52 (QQKQKQQQGQQGNCNQ) shows a compositional bias: low complexity. Positions 82–318 (DPRLKVLKKE…FDRQILAFQK (237 aa)) constitute a Bin3-type SAM domain.

It belongs to the methyltransferase superfamily.

Probable RNA methyltransferase. The polypeptide is Probable RNA methyltransferase At5g51130 (Arabidopsis thaliana (Mouse-ear cress)).